A 438-amino-acid chain; its full sequence is MSMFLDQVTIDVKAGKGGDGMVAFRREKYVPDGGPAGGDGGRGGDVVLVVEEGLRTLMDFRFNRHFKATPGENGMSKGMHGRGSEDLLVKVPPGTTVRDAETGALIGDLIENGQTLVVAKGGRGGRGNIRFASPRNPAPEIAENGEPGQERKIELELKVLADVGLVGFPSVGKSTLLSVISSARPKIGAYHFTTLVPNLGMVTTSDGRSFAAADLPGLIEGASQGVGLGTQFLRHIERTRVILHVIDMSGMEGRDPYEDYLAINKELASHNLRLMERPQIIVANKMDMPEAEENLAKFKEQLAKERTDEYADELPIFPISGVTRKGIEPLLNATADLLEVTPEFPLYEDEVVEEETVRYGFQPEGPEFTIDREPDASWVLSGEKLEKLFEMTNFDHDETVMRFARQLRGMGVDEALRARGAKDGDIVRIGNFEFEFVE.

The region spanning 2–160 is the Obg domain; sequence SMFLDQVTID…RKIELELKVL (159 aa). Residues 128–147 are disordered; that stretch reads NIRFASPRNPAPEIAENGEP. Residues 161 to 339 enclose the OBG-type G domain; the sequence is ADVGLVGFPS…LLNATADLLE (179 aa). GTP contacts are provided by residues 167–174, 192–196, 214–217, 284–287, and 320–322; these read GFPSVGKS, FTTLV, DLPG, NKMD, and SGV. Mg(2+) contacts are provided by serine 174 and threonine 194. The 79-residue stretch at 360-438 folds into the OCT domain; that stretch reads GFQPEGPEFT…IGNFEFEFVE (79 aa).

The protein belongs to the TRAFAC class OBG-HflX-like GTPase superfamily. OBG GTPase family. In terms of assembly, monomer. It depends on Mg(2+) as a cofactor.

The protein localises to the cytoplasm. Its function is as follows. An essential GTPase which binds GTP, GDP and possibly (p)ppGpp with moderate affinity, with high nucleotide exchange rates and a fairly low GTP hydrolysis rate. Plays a role in control of the cell cycle, stress response, ribosome biogenesis and in those bacteria that undergo differentiation, in morphogenesis control. In Enterococcus faecalis (strain ATCC 700802 / V583), this protein is GTPase Obg.